We begin with the raw amino-acid sequence, 353 residues long: UPF0283 membrane protein YcjF (353 aa).

Basic and acidic residues predominate over residues 1–19; that stretch reads MSEPLKPRIDFAEPLKEEP. The interval 1–35 is disordered; that stretch reads MSEPLKPRIDFAEPLKEEPTSAFKAQQTFSEAESR. 3 helical membrane passes run 70-90, 100-120, and 213-233; these read MVMG…IQWT, VALG…GSVV, and ESTL…FIAW.

It belongs to the UPF0283 family.

Its subcellular location is the cell inner membrane. This is UPF0283 membrane protein YcjF from Salmonella agona (strain SL483).